The chain runs to 1117 residues: Protein ECM21 (1117 aa).

Disordered stretches follow at residues 1–48 (MPFI…RRSS) and 63–155 (VHSP…YSQI). Polar residues predominate over residues 11 to 34 (KNSSHSLSETDLNQSKGQPFQPSP). Serine 18 carries the phosphoserine modification. The span at 70–81 (NNTTKGGNNNGN) shows a compositional bias: low complexity. Serine 115 carries the phosphoserine modification. Residues 117–130 (SDSATTTPRSSTSD) show a composition bias toward low complexity. Serine 140 carries the post-translational modification Phosphoserine. Lysine 191 participates in a covalent cross-link: Glycyl lysine isopeptide (Lys-Gly) (interchain with G-Cter in ubiquitin). Disordered stretches follow at residues 275–312 (ATTA…ELNT) and 486–523 (YRQD…AQAH). Serine 286 is modified (phosphoserine). Over residues 501-519 (SSSSLSSTTSSLKLTETES) the composition is skewed to low complexity. Phosphoserine is present on residues serine 527 and serine 550. Glycyl lysine isopeptide (Lys-Gly) (interchain with G-Cter in ubiquitin) cross-links involve residues lysine 577, lysine 651, and lysine 712. Phosphoserine is present on serine 775. Residues lysine 794, lysine 807, and lysine 1024 each participate in a glycyl lysine isopeptide (Lys-Gly) (interchain with G-Cter in ubiquitin) cross-link. 2 disordered regions span residues 1016 to 1065 (RSRF…KDKQ) and 1079 to 1117 (KDDE…SDEE). Over residues 1027-1059 (STPSPVNRSHNSSPTNGLSQANGTVRIPNATTE) the composition is skewed to polar residues. Position 1035 is a phosphoserine (serine 1035). Over residues 1089–1098 (SSSSADSLLS) the composition is skewed to low complexity.

This sequence belongs to the CSR2 family.

The protein localises to the cytoplasm. Functionally, may be involved in cell wall organization and biogenesis. The sequence is that of Protein ECM21 (ECM21) from Saccharomyces cerevisiae (strain ATCC 204508 / S288c) (Baker's yeast).